The following is a 429-amino-acid chain: U3 small nucleolar RNA-associated protein 18 homolog (429 aa).

4 WD repeats span residues Arg117 to Arg156, Thr295 to Asn336, Asn345 to Asn386, and Gly392 to Asp428.

This sequence belongs to the WD repeat UTP18 family.

It is found in the nucleus. The protein localises to the nucleolus. Involved in nucleolar processing of pre-18S ribosomal RNA. This is U3 small nucleolar RNA-associated protein 18 homolog from Caenorhabditis elegans.